The chain runs to 449 residues: Tubulin alpha-8 chain (449 aa).

The MREC motif signature appears at 1-4 (MREC). GTP contacts are provided by Gln11, Glu71, Ser140, Gly144, Thr145, Thr179, Asn206, and Asn228. Glu71 serves as a coordination point for Mg(2+). The active site involves Glu254.

Belongs to the tubulin family. Dimer of alpha and beta chains. A typical microtubule is a hollow water-filled tube with an outer diameter of 25 nm and an inner diameter of 15 nM. Alpha-beta heterodimers associate head-to-tail to form protofilaments running lengthwise along the microtubule wall with the beta-tubulin subunit facing the microtubule plus end conferring a structural polarity. Microtubules usually have 13 protofilaments but different protofilament numbers can be found in some organisms and specialized cells. It depends on Mg(2+) as a cofactor. Post-translationally, some glutamate residues at the C-terminus are polyglycylated, resulting in polyglycine chains on the gamma-carboxyl group. Glycylation is mainly limited to tubulin incorporated into axonemes (cilia and flagella) whereas glutamylation is prevalent in neuronal cells, centrioles, axonemes, and the mitotic spindle. Both modifications can coexist on the same protein on adjacent residues, and lowering polyglycylation levels increases polyglutamylation, and reciprocally. Cilia and flagella glycylation is required for their stability and maintenance. Flagella glycylation controls sperm motility. In terms of processing, some glutamate residues at the C-terminus are polyglutamylated, resulting in polyglutamate chains on the gamma-carboxyl group. Polyglutamylation plays a key role in microtubule severing by spastin (SPAST). SPAST preferentially recognizes and acts on microtubules decorated with short polyglutamate tails: severing activity by SPAST increases as the number of glutamates per tubulin rises from one to eight, but decreases beyond this glutamylation threshold. Glutamylation is also involved in cilia motility. The C-terminal phenylalanine residue is cleaved by MATCAP1/KIAA0895L. Expressed at highest levels in the testis, followed by skeletal and heart muscle. Expressed at low levels in the developing brain.

The protein localises to the cytoplasm. It is found in the cytoskeleton. The catalysed reaction is GTP + H2O = GDP + phosphate + H(+). Functionally, tubulin is the major constituent of microtubules, a cylinder consisting of laterally associated linear protofilaments composed of alpha- and beta-tubulin heterodimers. Microtubules grow by the addition of GTP-tubulin dimers to the microtubule end, where a stabilizing cap forms. Below the cap, tubulin dimers are in GDP-bound state, owing to GTPase activity of alpha-tubulin. This is Tubulin alpha-8 chain (Tuba8) from Mus musculus (Mouse).